The sequence spans 262 residues: Zinc finger protein ehn-3 (262 aa).

C2H2-type zinc fingers lie at residues 2–24, 30–52, 59–84, and 92–115; these read EKCD…KVMH, FECQ…MMTH, FECP…DSEH, and AKCK…HTAH. The segment at 179 to 204 is disordered; that stretch reads SVKSAKELSPTPSTEIETPEEEELDG. The span at 185–194 shows a compositional bias: low complexity; that stretch reads ELSPTPSTEI. A compositionally biased stretch (acidic residues) spans 195-204; sequence ETPEEEELDG. 2 consecutive C2H2-type zinc fingers follow at residues 208–230 and 236–260; these read WYCD…SGLH and FKCS…YANH.

This sequence belongs to the krueppel C2H2-type zinc-finger protein family.

It is found in the nucleus. In terms of biological role, together with the zinc finger protein ztf-16, plays a role in gonadogenesis, specifically in somatic gonad precursor cell development. This is possibly by regulating tra-1 gene expression. Functionally, required for proper gonadal primordium assembly and somatic gonad precursor cell morphology. This is Zinc finger protein ehn-3 from Caenorhabditis elegans.